We begin with the raw amino-acid sequence, 273 residues long: SUMO-1 cysteine protease S273R (273 aa).

Catalysis depends on residues His168 and Asn187. Gln226 lines the substrate pocket. The active-site Nucleophile is the Cys232.

It belongs to the peptidase C63 family.

Its subcellular location is the host cytoplasm. It localises to the virion. Functionally, cysteine protease that plays several role during infection including processing of the structural polyprotein or inhibition of the host immune response. Catalyzes the maturation of the pp220 and pp62 polyprotein precursors into core-shell proteins. Plays a role in the disruption of host pyroptosis via specific cleavage of gasdermin D/GSDMD. In addition, strongly decreases the host cGAS-STING signaling by targeting IKBKE via its enzymatic activity. Also impairs host FOXJ1-mediated antiviral effect via degradation of FOXJ1. This is SUMO-1 cysteine protease S273R from Ornithodoros (relapsing fever ticks).